The chain runs to 325 residues: NADH-quinone oxidoreductase subunit H (325 aa).

9 helical membrane passes run 11–31 (ILLT…CGAF), 50–69 (SRVG…KMFF), 81–101 (LIFT…FAIV), 114–134 (IGIL…LFAG), 154–174 (LSYE…AGSF), 186–206 (LWNI…GVAV), 237–257 (FFVG…TLFF), 265–285 (LPPF…FILV), and 304–324 (ICLP…LYHA).

The protein belongs to the complex I subunit 1 family. In terms of assembly, NDH-1 is composed of 13 different subunits. Subunits NuoA, H, J, K, L, M, N constitute the membrane sector of the complex.

It localises to the cell inner membrane. The catalysed reaction is a quinone + NADH + 5 H(+)(in) = a quinol + NAD(+) + 4 H(+)(out). Functionally, NDH-1 shuttles electrons from NADH, via FMN and iron-sulfur (Fe-S) centers, to quinones in the respiratory chain. The immediate electron acceptor for the enzyme in this species is believed to be ubiquinone. Couples the redox reaction to proton translocation (for every two electrons transferred, four hydrogen ions are translocated across the cytoplasmic membrane), and thus conserves the redox energy in a proton gradient. This subunit may bind ubiquinone. In Edwardsiella ictaluri (strain 93-146), this protein is NADH-quinone oxidoreductase subunit H.